Here is a 219-residue protein sequence, read N- to C-terminus: uncharacterized protein (219 aa).

A helical transmembrane segment spans residues 28 to 50 (IVSSLIAGGYALFVSAFTSYVYT). Positions 155 to 218 (EILRESLSEI…EEIEKELEFF (64 aa)) form a coiled coil.

It localises to the membrane. This is an uncharacterized protein from Aquifex aeolicus (strain VF5).